Reading from the N-terminus, the 80-residue chain is DNA-binding protein HU-like (80 aa).

It belongs to the bacterial histone-like protein family.

In terms of biological role, histone-like DNA-binding protein which is capable of wrapping DNA to stabilize it, and thus to prevent its denaturation under extreme environmental conditions. This chain is DNA-binding protein HU-like, found in Rickettsia prowazekii (strain Madrid E).